The primary structure comprises 474 residues: tRNA-2-methylthio-N(6)-dimethylallyladenosine synthase (474 aa).

One can recognise an MTTase N-terminal domain in the interval 3–120; sequence KKLHIKTWGC…LPEMINHVQE (118 aa). 6 residues coordinate [4Fe-4S] cluster: Cys12, Cys49, Cys83, Cys157, Cys161, and Cys164. The Radical SAM core domain maps to 143-375; that stretch reads RAEGPTAFVS…QQRISQQAME (233 aa). One can recognise a TRAM domain in the interval 378-441; that stretch reads RKMVGTVQRV…ASSLRGILLR (64 aa).

Belongs to the methylthiotransferase family. MiaB subfamily. As to quaternary structure, monomer. It depends on [4Fe-4S] cluster as a cofactor.

It localises to the cytoplasm. The catalysed reaction is N(6)-dimethylallyladenosine(37) in tRNA + (sulfur carrier)-SH + AH2 + 2 S-adenosyl-L-methionine = 2-methylsulfanyl-N(6)-dimethylallyladenosine(37) in tRNA + (sulfur carrier)-H + 5'-deoxyadenosine + L-methionine + A + S-adenosyl-L-homocysteine + 2 H(+). Catalyzes the methylthiolation of N6-(dimethylallyl)adenosine (i(6)A), leading to the formation of 2-methylthio-N6-(dimethylallyl)adenosine (ms(2)i(6)A) at position 37 in tRNAs that read codons beginning with uridine. This is tRNA-2-methylthio-N(6)-dimethylallyladenosine synthase from Yersinia pseudotuberculosis serotype O:3 (strain YPIII).